Reading from the N-terminus, the 633-residue chain is Biosynthetic arginine decarboxylase (633 aa).

Lysine 101 is modified (N6-(pyridoxal phosphate)lysine). Substrate is bound at residue 284–294; it reads VDVGGGLGVDY.

Belongs to the Orn/Lys/Arg decarboxylase class-II family. SpeA subfamily. Mg(2+) is required as a cofactor. Pyridoxal 5'-phosphate serves as cofactor.

The catalysed reaction is L-arginine + H(+) = agmatine + CO2. It functions in the pathway amine and polyamine biosynthesis; agmatine biosynthesis; agmatine from L-arginine: step 1/1. In terms of biological role, catalyzes the biosynthesis of agmatine from arginine. The chain is Biosynthetic arginine decarboxylase from Aeromonas salmonicida (strain A449).